Consider the following 337-residue polypeptide: tRNA N6-adenosine threonylcarbamoyltransferase (337 aa).

Fe cation is bound by residues histidine 111 and histidine 115. Residues 134–138 (LVSGG), aspartate 167, glycine 180, and asparagine 272 each bind substrate. Residue aspartate 300 participates in Fe cation binding.

The protein belongs to the KAE1 / TsaD family. Fe(2+) serves as cofactor.

It localises to the cytoplasm. It carries out the reaction L-threonylcarbamoyladenylate + adenosine(37) in tRNA = N(6)-L-threonylcarbamoyladenosine(37) in tRNA + AMP + H(+). Required for the formation of a threonylcarbamoyl group on adenosine at position 37 (t(6)A37) in tRNAs that read codons beginning with adenine. Is involved in the transfer of the threonylcarbamoyl moiety of threonylcarbamoyl-AMP (TC-AMP) to the N6 group of A37, together with TsaE and TsaB. TsaD likely plays a direct catalytic role in this reaction. The protein is tRNA N6-adenosine threonylcarbamoyltransferase of Shewanella sediminis (strain HAW-EB3).